Here is a 581-residue protein sequence, read N- to C-terminus: DNA polymerase alpha subunit B (581 aa).

The protein belongs to the DNA polymerase alpha subunit B family. DNA polymerase alpha:primase is a four subunit enzyme complex, which is assembled throughout the cell cycle, and consists of the two DNA polymerase subunits A and B, and the DNA primase large and small subunits. Subunit B binds to subunit A.

It localises to the nucleus. Functionally, may play an essential role at the early stage of chromosomal DNA replication by coupling the polymerase alpha/primase complex to the cellular replication machinery. Required for the distribution of pie-1 in cell divsion. The chain is DNA polymerase alpha subunit B (div-1) from Caenorhabditis elegans.